We begin with the raw amino-acid sequence, 23 residues long: Phospholipase A2 homolog 4 (23 aa).

It belongs to the phospholipase A2 family. Group II subfamily. K49 sub-subfamily. In terms of assembly, homodimer; non-covalently linked (probable alternative/compact dimer conformation in solution). In terms of tissue distribution, expressed by the venom gland.

The protein localises to the secreted. In terms of biological role, snake venom phospholipase A2 homolog that lacks enzymatic activity. Induces acute muscle damage after intramuscular injection in mice and disrupts negatively charged liposomes but not positively charged ones. Also exerts a weak anticoagulant effect only at concentrations of 40 ug/ml or higher. A model of myotoxic mechanism has been proposed: an apo Lys49-PLA2 is activated by the entrance of a hydrophobic molecule (e.g. fatty acid) at the hydrophobic channel of the protein leading to a reorientation of a monomer. This reorientation causes a transition between 'inactive' to 'active' states, causing alignment of C-terminal and membrane-docking sites (MDoS) side-by-side and putting the membrane-disruption sites (MDiS) in the same plane, exposed to solvent and in a symmetric position for both monomers. The MDoS region stabilizes the toxin on membrane by the interaction of charged residues with phospholipid head groups. Subsequently, the MDiS region destabilizes the membrane with penetration of hydrophobic residues. This insertion causes a disorganization of the membrane, allowing an uncontrolled influx of ions (i.e. calcium and sodium), and eventually triggering irreversible intracellular alterations and cell death. The sequence is that of Phospholipase A2 homolog 4 from Bothrops asper (Terciopelo).